The chain runs to 277 residues: C2H2-type zinc-finger transcription factor (277 aa).

Disordered stretches follow at residues 23-66 (PTMN…AHPP) and 78-146 (MNEP…TDSI). Residues 27–37 (EIETTDNTYPR) show a composition bias toward polar residues. The C2H2-type; degenerate zinc-finger motif lies at 185–208 (HPCPDCGRVFTRSTARNFHRQSGT).

This sequence belongs to the GLI C2H2-type zinc-finger protein family.

It is found in the nucleus. C2H2-type zinc-finger transcription factor that controls the expression of the nonribosomal peptide synthases inpA and inpB, as well as of the other inp cluster-associated genes. Also mediates the expression of the asperfuranone biosynthesis gene cluster by binding to the afoA promoter. Probably recognizes the 5'-CT/C/AAAAGGAT/AT/GG/CA-3' motif in the promoters of teget genes. The chain is C2H2-type zinc-finger transcription factor from Emericella nidulans (strain FGSC A4 / ATCC 38163 / CBS 112.46 / NRRL 194 / M139) (Aspergillus nidulans).